The sequence spans 426 residues: Serine--tRNA ligase (426 aa).

Position 233–235 (233–235 (TAE)) interacts with L-serine. ATP is bound at residue 264–266 (RSE). An L-serine-binding site is contributed by Glu287. 351-354 (EISS) contributes to the ATP binding site. Residue Ser387 participates in L-serine binding.

This sequence belongs to the class-II aminoacyl-tRNA synthetase family. Type-1 seryl-tRNA synthetase subfamily. As to quaternary structure, homodimer. The tRNA molecule binds across the dimer.

The protein localises to the cytoplasm. It catalyses the reaction tRNA(Ser) + L-serine + ATP = L-seryl-tRNA(Ser) + AMP + diphosphate + H(+). The enzyme catalyses tRNA(Sec) + L-serine + ATP = L-seryl-tRNA(Sec) + AMP + diphosphate + H(+). It participates in aminoacyl-tRNA biosynthesis; selenocysteinyl-tRNA(Sec) biosynthesis; L-seryl-tRNA(Sec) from L-serine and tRNA(Sec): step 1/1. Functionally, catalyzes the attachment of serine to tRNA(Ser). Is also able to aminoacylate tRNA(Sec) with serine, to form the misacylated tRNA L-seryl-tRNA(Sec), which will be further converted into selenocysteinyl-tRNA(Sec). The protein is Serine--tRNA ligase of Pseudomonas syringae pv. tomato (strain ATCC BAA-871 / DC3000).